Reading from the N-terminus, the 415-residue chain is Mechanosensing system component YbdG (415 aa).

The Periplasmic portion of the chain corresponds to 1–24 (MQDLISQVEDLAGIEIDHTTSMVM). The chain crosses the membrane as a helical span at residues 25-45 (IFGIIFLTAVVVHIILHWVVL). Topologically, residues 46–67 (RTFEKRAIASSRLWLQIITQNK) are cytoplasmic. The helical transmembrane segment at 68 to 88 (LFHRLAFTLQGIIVNIQAVFW) threads the bilayer. The Periplasmic segment spans residues 89–104 (LQKGTEAADILTTCAQ). A helical transmembrane segment spans residues 105 to 125 (LWIMMYALLSVFSLLDVILNL). The Cytoplasmic segment spans residues 126–148 (AQKFPAASQLPLKGIFQGIKLIG). Residues 149–169 (AILVGILMISLLIGQSPAILI) form a helical membrane-spanning segment. At 170–173 (SGLG) the chain is on the periplasmic side. Residues 174-194 (AMAAVLMLVFKDPILGLVAGI) form a helical membrane-spanning segment. Residues 195–415 (QLSANDMLKL…IRSLAGAFKQ (221 aa)) are Cytoplasmic-facing.

Belongs to the MscS (TC 1.A.23) family. In terms of assembly, homoheptamer.

The protein localises to the cell inner membrane. Functionally, functions as a component of a mechanosensing system that transmits signals triggered by external osmotic changes to intracellular factors. This chain is Mechanosensing system component YbdG (ybdG), found in Shigella flexneri.